The chain runs to 646 residues: Protein SENSITIVE TO UV 2 (646 aa).

The tract at residues 42–70 (PAPPPSTKISSSLSHPMQLQSSAGQQRKQ) is disordered. A compositionally biased stretch (polar residues) spans 48 to 70 (TKISSSLSHPMQLQSSAGQQRKQ). The Nuclear localization signal signature appears at 119–126 (NRRCDSEK). The stretch at 123 to 157 (DSEKDLEIDRLKKELERVSKQLLDVEQECSQLKKG) forms a coiled coil. The Phosphatase tensin-type domain maps to 376-646 (KRTEQDVKQE…VFAFLGDNTI (271 aa)).

It belongs to the serpin family. Forms multimers through the coiled-coil domain. Probably phosphorylated by ATR. In terms of tissue distribution, accumulates throughout the root tip.

The protein localises to the nucleus. It is found in the cytoplasm. Its function is as follows. Required for tolerance to DNA-damaging and cross-linking agents such as UVB irradiation, gamma-radiation, aphidicolin, ionizing radiation and hydroxyurea (HU), cisplatin (CDDP) and mitomycin C (MMC). Involved in cell-cycle G2/M arrest in response to DNA damage. Required for aluminum-dependent gene regulation and root growth inhibition in an ATR-dependent manner by halting cell cycle progression and triggering loss of the quiescent center (QC). The polypeptide is Protein SENSITIVE TO UV 2 (Arabidopsis thaliana (Mouse-ear cress)).